The sequence spans 220 residues: GTP cyclohydrolase 1 (220 aa).

3 residues coordinate Zn(2+): C113, H116, and C184.

It belongs to the GTP cyclohydrolase I family. Homomer.

The enzyme catalyses GTP + H2O = 7,8-dihydroneopterin 3'-triphosphate + formate + H(+). It participates in cofactor biosynthesis; 7,8-dihydroneopterin triphosphate biosynthesis; 7,8-dihydroneopterin triphosphate from GTP: step 1/1. The protein is GTP cyclohydrolase 1 of Hamiltonella defensa subsp. Acyrthosiphon pisum (strain 5AT).